Here is a 158-residue protein sequence, read N- to C-terminus: MARISTSSNRPVPTSSALRRQRERDDGGRSTRAPGHNTGLYGNQPGDPPTIRSTNTTVKRRYRPGTKALREIRRYQRSSELLIRKLPFARLVKEVAENYIGADYGIRWQSNAVLALQEACEAFLVHLLEDTNLCAIHAKRVTIMQKDIQLARRIRGNI.

Over residues 1 to 18 the composition is skewed to polar residues; the sequence is MARISTSSNRPVPTSSAL. A disordered region spans residues 1-59; the sequence is MARISTSSNRPVPTSSALRRQRERDDGGRSTRAPGHNTGLYGNQPGDPPTIRSTNTTVK. A compositionally biased stretch (basic and acidic residues) spans 20 to 29; the sequence is RQRERDDGGR. The segment at 54–157 is H3-like; it reads TNTTVKRRYR…IQLARRIRGN (104 aa).

This sequence belongs to the histone H3 family. In terms of assembly, component of centromeric nucleosomes, where DNA is wrapped around a histone octamer core. The octamer contains two molecules each of H2A, H2B, CSE4/CENPA and H4 assembled in one CSE4-H4 heterotetramer and two H2A-H2B heterodimers. Interacts with the inner kinetochore. Ubiquitinated. Is degraded through ubiquitin-mediated proteolysis when not protected by its association to the kinetochore.

The protein localises to the nucleus. It localises to the chromosome. It is found in the centromere. Histone H3-like nucleosomal protein that is specifically found in centromeric nucleosomes. Replaces conventional H3 in the nucleosome core of centromeric chromatin that serves as an assembly site for the inner kinetochore. Required for recruitment and assembly of kinetochore proteins, mitotic progression and chromosome segregation. May serve as an epigenetic mark that propagates centromere identity through replication and cell division. The sequence is that of Histone H3-like centromeric protein CSE4 (CSE4) from Millerozyma farinosa (Yeast).